A 102-amino-acid chain; its full sequence is MYAVVKTGGKQYKVSEGDFLKVEKLEGAVGDTVEFSEILMVGGDKVVIGTPLVPSASVVGKIVEQGKDKKILVFKSKRRKNTRKLNGHRQLRTILKIEKINA.

The protein belongs to the bacterial ribosomal protein bL21 family. Part of the 50S ribosomal subunit. Contacts protein L20.

In terms of biological role, this protein binds to 23S rRNA in the presence of protein L20. This Citrifermentans bemidjiense (strain ATCC BAA-1014 / DSM 16622 / JCM 12645 / Bem) (Geobacter bemidjiensis) protein is Large ribosomal subunit protein bL21.